Consider the following 543-residue polypeptide: Chaperonin GroEL (543 aa).

Residues 29–32, 86–90, Gly413, 477–479, and Asp493 contribute to the ATP site; these read TLGP, DGTTT, and DAL.

This sequence belongs to the chaperonin (HSP60) family. In terms of assembly, forms a cylinder of 14 subunits composed of two heptameric rings stacked back-to-back. Interacts with the co-chaperonin GroES.

The protein resides in the cytoplasm. The catalysed reaction is ATP + H2O + a folded polypeptide = ADP + phosphate + an unfolded polypeptide.. Functionally, together with its co-chaperonin GroES, plays an essential role in assisting protein folding. The GroEL-GroES system forms a nano-cage that allows encapsulation of the non-native substrate proteins and provides a physical environment optimized to promote and accelerate protein folding. This is Chaperonin GroEL from Clostridium novyi (strain NT).